A 501-amino-acid chain; its full sequence is Ammonium transporter 1 member 1 (501 aa).

A run of 10 helical transmembrane segments spans residues 8–28 (LAVLLGPNATAAANYICGQLG), 46–66 (LLFSAYLVFSMQLGFAMLCAG), 81–101 (VLDAAAGGLFYYLFGYAFAFG), 128–148 (FLYQWAFAIAAAGITSGSIAE), 152–172 (FVAYLIYSSFLTGFVYPVVSH), 199–219 (FAGSGVVHMVGGIAGLWGALI), 243–263 (LVVLGTFLLWFGWYGFNPGSF), 333–353 (VVEPWAAIICGFVAALVLLGC), 366–386 (LEAAQLHGGCGAWGLIFTALF), and 419–439 (LIQIIVITGWVSATMGTLFFI). Thr-460 carries the phosphothreonine modification. A phosphoserine mark is found at Ser-475, Ser-488, Ser-490, and Ser-492.

It belongs to the ammonia transporter channel (TC 1.A.11.2) family. Self interacts. Interacts with the receptor protein kinases CEPR2, At2g28990 and PAM74. As to expression, highly expressed in roots. Expressed in root tips, root hairs, root epidermis, rhizodermis, cortex and pericycle. Expressed in leaves epidermal and mesophyll cells.

It localises to the cell membrane. High affinity ammonium transporter probably involved in ammonium uptake from the soil, long-distance transport to the shoots and re-uptake of apoplastic ammonium that derives from photorespiration in shoots. Contributes with AMT1-3 to the overall ammonium uptake capacity in roots under nitrogen-deficiency conditions. The sequence is that of Ammonium transporter 1 member 1 (AMT1-1) from Arabidopsis thaliana (Mouse-ear cress).